Reading from the N-terminus, the 593-residue chain is Mitochondrial sodium/calcium exchanger protein (593 aa).

An N-terminal signal peptide occupies residues 1 to 20; it reads MGPLWALRVAGALSVAGVLA. Residues 21–93 lie on the Extracellular side of the membrane; sequence GHDGSQRAGQ…GAFCTFPSSL (73 aa). Asn-58 carries an N-linked (GlcNAc...) asparagine glycan. A helical membrane pass occupies residues 94–114; that stretch reads LPLSVSLYALWLLYLFVILGV. At 115-135 the chain is on the cytoplasmic side; it reads TAEKFFCPNLSAISTNLKLSH. Residues 136-158 traverse the membrane as a helical segment; sequence NGLGVVGHSLTPALHGVTFLAFG. Residues 159 to 178 lie on the Extracellular side of the membrane; sequence NGAPDIFSAVVAFSDPRTAG. The helical transmembrane segment at 179–199 threads the bilayer; the sequence is LAVGAIFGAGIFVTTVVAGGI. At 200–215 the chain is on the cytoplasmic side; sequence ALVKPFAAASRPFLRD. A helical transmembrane segment spans residues 216–236; the sequence is VIFYMVAVFLTFLVLYFGYIT. Over 237–239 the chain is Extracellular; sequence LGE. The helical transmembrane segment at 240–260 threads the bilayer; sequence ALGYLGLYVFYVFTVVLCTWI. The Cytoplasmic segment spans residues 261–334; sequence HRWQRGDGPP…KWRRKPWYWR (74 aa). A compositionally biased stretch (pro residues) spans 268–277; that stretch reads GPPPPGPWEP. The tract at residues 268–291 is disordered; sequence GPPPPGPWEPAIPTDAEEQESSGT. The helical transmembrane segment at 335 to 355 threads the bilayer; sequence LFKVLKVPVELVLLLTVPVVD. Topologically, residues 356–369 are extracellular; the sequence is PDKDDLNWKRPLNC. The chain crosses the membrane as a helical span at residues 370-390; the sequence is LHIVTGPLLCIFTLKSGAYGL. Residues 391–395 are Cytoplasmic-facing; it reads YQIQG. Residues 396-416 traverse the membrane as a helical segment; that stretch reads VFPVWALVALAGSVLAIIVFV. At 417–428 the chain is on the extracellular side; sequence TTHNEEPPKYHC. Residues 429 to 449 form a helical membrane-spanning segment; that stretch reads VFAFLGFLSSAMWINAAATEL. Over 450–454 the chain is Cytoplasmic; the sequence is VNILR. The helical transmembrane segment at 455 to 475 threads the bilayer; sequence TLGIIFELSNTVLGLTLLAWG. Topologically, residues 476–496 are extracellular; sequence NSIGDTFSDLTMARQGYPRMA. Residues 497 to 517 traverse the membrane as a helical segment; it reads FSACFGGIIFNILVGVGLGCL. The Cytoplasmic segment spans residues 518–533; it reads LQMTNSQMVVKLEPDS. The helical transmembrane segment at 534–554 threads the bilayer; that stretch reads LLVWILAGALGLSLVFSFVAV. Over 555 to 564 the chain is Extracellular; that stretch reads PAQCFQLGKA. Residues 565–585 traverse the membrane as a helical segment; that stretch reads YGTCLILYYLVFLCVALLTEF. Topologically, residues 586–593 are cytoplasmic; it reads RVIHLAAT.

Belongs to the Ca(2+):cation antiporter (CaCA) (TC 2.A.19) family. SLC24A subfamily.

The protein resides in the mitochondrion inner membrane. The enzyme catalyses Ca(2+)(in) + 3 Na(+)(out) = Ca(2+)(out) + 3 Na(+)(in). Mitochondrial sodium/calcium antiporter that mediates sodium-dependent calcium efflux from mitochondrion, by mediating the exchange of 3 sodium ions per 1 calcium ion. Plays a central role in mitochondrial calcium homeostasis by mediating mitochondrial calcium extrusion: calcium efflux is essential for mitochondrial function and cell survival, notably in cardiomyocytes. Involved in B-lymphocyte chemotaxis. This is Mitochondrial sodium/calcium exchanger protein from Gallus gallus (Chicken).